Consider the following 1295-residue polypeptide: Unconventional myosin-VI (1295 aa).

Residues 2-53 enclose the Myosin N-terminal SH3-like domain; the sequence is EDGRPVWAPHPTEGFQMGNIVDIGPDSLTIEPLGQKGKTFLALINQVFPAEE. In terms of domain architecture, Myosin motor spans 57 to 771; it reads KDVEDNCSLM…KFAEFDQIMK (715 aa). An ATP-binding site is contributed by 151–158; the sequence is GESGAGKT. Ser267 bears the Phosphoserine mark. The tract at residues 273–317 is responsible for slow ATPase activity; the sequence is YLNRGCTRYFANKETDKQILQNRKTPEHLKAGSLKDPLLDDHGDF. Thr405 carries the post-translational modification Phosphothreonine. Residue Ser604 is modified to Phosphoserine. The segment at 651 to 673 is actin-binding; that stretch reads LNLLLDKLRSTGASFIRCIKPNL. The segment at 782-810 is required for binding calmodulin; it reads KRVNHWLICSRWKKVQWCSLSVIKLKNKI. An IQ domain is found at 813–842; that stretch reads RAEACIKMQKTIRMWLCKRRHKPRIDGLVK. The interval 835-916 is three-helix bundle; sequence PRIDGLVKVG…EVLLSALQKK (82 aa). Residues 917–984 form an SAH region; it reads KQQEEEAERL…EDDEKRIQAE (68 aa). The disordered stretch occupies residues 934–955; that stretch reads EKERKRREEDEQRRRKEEEERR. The interaction with TAX1BP1 and CALCOCO2/NDP52 stretch occupies residues 1061-1286; sequence KEMSEILSRG…ESRQARPTYA (226 aa). The segment at 1117–1119 is interaction with OPTN; the sequence is RRL. Ser1156 bears the Phosphoserine mark. The interval 1158–1286 is interaction with TOM1; the sequence is QQNPAAQLPA…ESRQARPTYA (129 aa).

The protein belongs to the TRAFAC class myosin-kinesin ATPase superfamily. Myosin family. In terms of assembly, homodimer; dimerization seems to implicate the unfolding of the three-helix bundle region creating an additional calmodulin binding site, and cargo binding. Able to function as a monomer under specific conditions in vitro. Forms a complex with CFTR and DAB2 in the apical membrane of epithelial cells. Component of the DISP/DOCK7-induced septin displacement complex, at least composed of DOCK7, LRCH3 and MYO6. Binding to calmodulin through a unique insert, not found in other myosins, located in the neck region between the motor domain and the IQ domain appears to contribute to the directionality reversal. This interaction occurs only if the C-terminal lobe of calmodulin is occupied by calcium. Interaction with F-actin/ACTN1 occurs only at the apical brush border domain of the proximal tubule cells. Interacts with DAB2. In vitro, the C-terminal globular tail binds a C-terminal region of DAB2. Interacts with CFTR. Interacts with CABP5. Interacts (via residues 1158-1286) with TOM1 (via residues 392-463). Interacts (via residues 1060-1285) with OPTN. Interacts (via residues 1060-1285) with TAX1BP1 and CALCOCO2/NDP52. Interacts with TOM1L2. Interacts with CLIC5; may work together in a complex which also includes RDX and MYO6 to stabilize linkages between the plasma membrane and subjacent actin cytoskeleton at the base of stereocilia. Post-translationally, phosphorylation in the motor domain, induced by EGF, results in translocation of MYO6 from the cell surface to membrane ruffles and affects F-actin dynamics. Phosphorylated in vitro by p21-activated kinase (PAK). As to expression, expressed in the retina (at protein level).

It is found in the golgi apparatus. The protein resides in the trans-Golgi network membrane. It localises to the nucleus. Its subcellular location is the cytoplasm. The protein localises to the perinuclear region. It is found in the membrane. The protein resides in the clathrin-coated pit. It localises to the cytoplasmic vesicle. Its subcellular location is the clathrin-coated vesicle. The protein localises to the cell projection. It is found in the filopodium. The protein resides in the ruffle membrane. It localises to the microvillus. Its subcellular location is the cytosol. Myosins are actin-based motor molecules with ATPase activity. Unconventional myosins serve in intracellular movements. Myosin 6 is a reverse-direction motor protein that moves towards the minus-end of actin filaments. Has slow rate of actin-activated ADP release due to weak ATP binding. Functions in a variety of intracellular processes such as vesicular membrane trafficking and cell migration. Required for the structural integrity of the Golgi apparatus via the p53-dependent pro-survival pathway. Appears to be involved in a very early step of clathrin-mediated endocytosis in polarized epithelial cells. Together with TOM1, mediates delivery of endocytic cargo to autophagosomes thereby promoting autophagosome maturation and driving fusion with lysosomes. Links TOM1 with autophagy receptors, such as TAX1BP1; CALCOCO2/NDP52 and OPTN. May act as a regulator of F-actin dynamics. As part of the DISP complex, may regulate the association of septins with actin and thereby regulate the actin cytoskeleton. May play a role in transporting DAB2 from the plasma membrane to specific cellular targets. May play a role in the extension and network organization of neurites. Required for structural integrity of inner ear hair cells. Required for the correct localization of CLIC5 and RDX at the stereocilium base. Modulates RNA polymerase II-dependent transcription. The polypeptide is Unconventional myosin-VI (Bos taurus (Bovine)).